We begin with the raw amino-acid sequence, 57 residues long: Granulin-2 (57 aa).

Intrachain disulfides connect cysteine 4–cysteine 16 and cysteine 10–cysteine 26.

This sequence belongs to the granulin family. Granulins are disulfide bridged. In terms of tissue distribution, ubiquitous.

The protein resides in the secreted. Functionally, granulins have possible cytokine-like activity. They may play a role in inflammation, wound repair, and tissue remodeling. This is Granulin-2 from Cyprinus carpio (Common carp).